We begin with the raw amino-acid sequence, 530 residues long: Probable ATP-binding protein YbiT (530 aa).

2 consecutive ABC transporter domains span residues 2–252 (LVSS…ERLL) and 320–526 (LEVE…YLRS). Residues 34 to 41 (GANGSGKS) and 352 to 359 (GTNGVGKS) each bind ATP.

It belongs to the ABC transporter superfamily. ABCF family. YbiT subfamily.

This Escherichia coli O157:H7 protein is Probable ATP-binding protein YbiT (ybiT).